The following is a 1404-amino-acid chain: DNA-directed RNA polymerase subunit beta' (1404 aa).

Positions 60, 62, 75, and 78 each coordinate Zn(2+). Positions 449, 451, and 453 each coordinate Mg(2+). Zn(2+)-binding residues include C778, C852, C859, and C862. The tract at residues 1381–1404 (DRPLEEEEEEEIPQSIADDSDGDE) is disordered. Residues 1384-1404 (LEEEEEEEIPQSIADDSDGDE) show a composition bias toward acidic residues.

It belongs to the RNA polymerase beta' chain family. The RNAP catalytic core consists of 2 alpha, 1 beta, 1 beta' and 1 omega subunit. When a sigma factor is associated with the core the holoenzyme is formed, which can initiate transcription. The cofactor is Mg(2+). Zn(2+) is required as a cofactor.

It catalyses the reaction RNA(n) + a ribonucleoside 5'-triphosphate = RNA(n+1) + diphosphate. DNA-dependent RNA polymerase catalyzes the transcription of DNA into RNA using the four ribonucleoside triphosphates as substrates. In Leptospira borgpetersenii serovar Hardjo-bovis (strain JB197), this protein is DNA-directed RNA polymerase subunit beta'.